The chain runs to 211 residues: 2,3-bisphosphoglycerate-dependent phosphoglycerate mutase (211 aa).

Residues 9–16 (RHGQSEWN), 22–23 (TG), Arg-61, 88–91 (ERDY), Lys-99, 115–116 (RR), and 159–160 (GN) each bind substrate. Residue His-10 is the Tele-phosphohistidine intermediate of the active site. Catalysis depends on Glu-88, which acts as the Proton donor/acceptor.

This sequence belongs to the phosphoglycerate mutase family. BPG-dependent PGAM subfamily. In terms of assembly, homodimer.

The catalysed reaction is (2R)-2-phosphoglycerate = (2R)-3-phosphoglycerate. It functions in the pathway carbohydrate degradation; glycolysis; pyruvate from D-glyceraldehyde 3-phosphate: step 3/5. Its function is as follows. Catalyzes the interconversion of 2-phosphoglycerate and 3-phosphoglycerate. The chain is 2,3-bisphosphoglycerate-dependent phosphoglycerate mutase from Sinorhizobium fredii (strain NBRC 101917 / NGR234).